The chain runs to 391 residues: Small ribosomal subunit protein mS29 (391 aa).

Residues 1–17 (MLTGITRLFSRVQKLDP) constitute a mitochondrion transit peptide. A disordered region spans residues 30 to 59 (NSQVPAERPRTVSRTSDSDPAKHGEQHEGQ). Over residues 45–59 (SDSDPAKHGEQHEGQ) the composition is skewed to basic and acidic residues. N6-acetyllysine is present on residues lysine 168 and lysine 200.

Belongs to the mitochondrion-specific ribosomal protein mS29 family. In terms of assembly, component of the mitochondrial ribosome small subunit (28S) which comprises a 12S rRNA and about 30 distinct proteins. Interacts with DELE1. Interacts with NOA1.

The protein localises to the mitochondrion. It carries out the reaction GTP + H2O = GDP + phosphate + H(+). As a component of the mitochondrial small ribosomal subunit, it plays a role in the translation of mitochondrial mRNAs. Involved in mediating interferon-gamma-induced cell death. Displays GTPase activity in vitro. The chain is Small ribosomal subunit protein mS29 from Mus musculus (Mouse).